A 291-amino-acid polypeptide reads, in one-letter code: MAVTCDPEAFLSICFVTLVFLQLPLASIWKADFDVTGPHAPILAMAGGHVELQCQLFPNISAEDMELRWYRCQPSLAVHMHERGMDMDGEQKWQYRGRTTFMSDHVARGKAMVRSHRVTTFDNRTYCCRFKDGVKFGEATVQVQVAGLGREPRIQVTDQQDGVRAECTSAGCFPKSWVERRDFRGQARPAVTNLSASATTRLWAVASSLTLWDRAVEGLSCSISSPLLPERRKVAESHLPATFSRSSQFTAWKAALPLILVAMGLVIAGGICIFWKRQREKNKASLEEERE.

Positions 1–26 are cleaved as a signal peptide; sequence MAVTCDPEAFLSICFVTLVFLQLPLA. The Ig-like V-type domain occupies 27-146; it reads SIWKADFDVT…GEATVQVQVA (120 aa). Residues 27-254 are Extracellular-facing; sequence SIWKADFDVT…RSSQFTAWKA (228 aa). A disulfide bond links Cys54 and Cys128. N-linked (GlcNAc...) asparagine glycosylation is present at Asn59. Residues 255 to 275 traverse the membrane as a helical segment; it reads ALPLILVAMGLVIAGGICIFW. Residues 276 to 291 lie on the Cytoplasmic side of the membrane; that stretch reads KRQREKNKASLEEERE.

It belongs to the immunoglobulin superfamily. BTN/MOG family.

The protein resides in the membrane. The protein is Putative butyrophilin-like protein 10 pseudogene of Homo sapiens (Human).